Reading from the N-terminus, the 731-residue chain is MVHASLWQFRLQIIPWRLRNFCFLTSQCPYTSISSPDTVSVSSYYSLTSNNDQSLFHYFDHLLGLCLTAQQCRQVHAQVLLSDFIFRSGSLAANLISVYARLGLLLDARNVFETVSLVLLSDLRLWNSILKANVSHGLYENALELYRGMRQRGLTGDGYILPLILRACRYLGRFGLCRAFHTQVIQIGLKENLHVVNELLTLYPKAGRMGDAYNLFVEMPVRNRMSWNVMIKGFSQEYDCESAVKIFEWMQREEFKPDEVTWTSVLSCHSQCGKFEDVLKYFHLMRMSGNAVSGEALAVFFSVCAELEALSIAEKVHGYVIKGGFEEYLPSRNALIHVYGKQGKVKDAEHLFRQIRNKGIESWNSLITSFVDAGKLDEALSLFSELEEMNHVCNVKANVVTWTSVIKGCNVQGRGDDSLEYFRQMQFSKVLANSVTICCILSICAELPALNLGREIHGHVIRTSMSENILVQNALVNMYAKCGLLSEGSLVFEAIRDKDLISWNSIIKGYGMHGFAEKALSMFDRMISSGFHPDGIALVAVLSACSHAGLVEKGREIFYSMSKRFGLEPQQEHYACIVDLLGRVGFLKEASEIVKNMPMEPKVCVLGALLNSCRMHKNVDIAEGIASQLSVLEPERTGSYMLLSNIYSAGGRWEESANVRALAKKKDLKKVSGSSWIEVKKKKYKFSSGSIVQSEFETIYPVLEDLVSHMLKKGPTHDGNNYEDDLDLWTA.

PPR repeat units follow at residues 88-118, 122-156, 157-191, 192-222, 223-257, 258-292, 293-327, 328-358, 359-393, 398-432, 433-467, 468-498, 499-533, 534-569, and 570-600; these read SGSL…VSLV, DLRL…GLTG, DGYI…GLKE, NLHV…MPVR, NRMS…EFKP, DEVT…GNAV, SGEA…GFEE, YLPS…IRNK, GIES…NHVC, NVVT…KVLA, NSVT…SMSE, NILV…IRDK, DLIS…GFHP, DGIA…GLEP, and QQEH…MPME. The type E motif stretch occupies residues 605–680; the sequence is VLGALLNSCR…VSGSSWIEVK (76 aa). Residues 681 to 711 form a type E(+) motif region; the sequence is KKKYKFSSGSIVQSEFETIYPVLEDLVSHML.

The protein belongs to the PPR family. PCMP-E subfamily.

The chain is Putative pentatricopeptide repeat-containing protein At1g17630 (PCMP-E72) from Arabidopsis thaliana (Mouse-ear cress).